Here is a 206-residue protein sequence, read N- to C-terminus: MRELTKRQSEIYDYIKKIVQTKGYPPSVREIGEAVGLASSSTVHGHLSRLEEKGYIRRDPTKPRAIEIVSEQLDEVNVEETIHVPVIGKVTAGVPITAVENIEEYFPLPEHLTSTHNSDIFILNVVGESMIEAGILDGDKVIVRSQTIAENGDIIVAMTEDEEATVKRFYKEKNRYRLQPENSTMEPIYLDNVIVVGKVIGLYREM.

The H-T-H motif DNA-binding region spans 28-48; the sequence is VREIGEAVGLASSSTVHGHLS. Active-site for autocatalytic cleavage activity residues include serine 129 and lysine 167.

This sequence belongs to the peptidase S24 family. As to quaternary structure, homodimer.

It carries out the reaction Hydrolysis of Ala-|-Gly bond in repressor LexA.. In terms of biological role, represses a number of genes involved in the response to DNA damage (SOS response), including recA and lexA. In the presence of single-stranded DNA, RecA interacts with LexA causing an autocatalytic cleavage which disrupts the DNA-binding part of LexA, leading to derepression of the SOS regulon and eventually DNA repair. This is LexA repressor from Staphylococcus epidermidis (strain ATCC 35984 / DSM 28319 / BCRC 17069 / CCUG 31568 / BM 3577 / RP62A).